Consider the following 1066-residue polypeptide: DNA-directed RNA polymerase subunit beta (1066 aa).

This sequence belongs to the RNA polymerase beta chain family. In terms of assembly, in plastids the minimal PEP RNA polymerase catalytic core is composed of four subunits: alpha, beta, beta', and beta''. When a (nuclear-encoded) sigma factor is associated with the core the holoenzyme is formed, which can initiate transcription.

The protein localises to the plastid. It is found in the chloroplast. The catalysed reaction is RNA(n) + a ribonucleoside 5'-triphosphate = RNA(n+1) + diphosphate. DNA-dependent RNA polymerase catalyzes the transcription of DNA into RNA using the four ribonucleoside triphosphates as substrates. The protein is DNA-directed RNA polymerase subunit beta of Psilotum nudum (Whisk fern).